The following is a 177-amino-acid chain: Adenine phosphoribosyltransferase (177 aa).

The protein belongs to the purine/pyrimidine phosphoribosyltransferase family. Homodimer.

The protein localises to the cytoplasm. It carries out the reaction AMP + diphosphate = 5-phospho-alpha-D-ribose 1-diphosphate + adenine. The protein operates within purine metabolism; AMP biosynthesis via salvage pathway; AMP from adenine: step 1/1. Its function is as follows. Catalyzes a salvage reaction resulting in the formation of AMP, that is energically less costly than de novo synthesis. The sequence is that of Adenine phosphoribosyltransferase from Synechococcus sp. (strain RCC307).